The primary structure comprises 334 residues: Formamidase (334 aa).

Positions 14 to 260 (FLVAAIQFPV…WEIVTGEIYP (247 aa)) constitute a CN hydrolase domain. The Proton acceptor role is filled by Glu-60. Lys-133 acts as the Proton donor in catalysis. Catalysis depends on Cys-166, which acts as the Nucleophile.

The protein belongs to the carbon-nitrogen hydrolase superfamily. Aliphatic amidase family.

The catalysed reaction is formamide + H2O = formate + NH4(+). Functionally, is an aliphatic amidase with a restricted substrate specificity, as it only hydrolyzes formamide. This is Formamidase from Helicobacter pylori (strain P12).